A 236-amino-acid chain; its full sequence is Octanoyltransferase (236 aa).

In terms of domain architecture, BPL/LPL catalytic spans 36–220; it reads DQVPDTVLLL…HLAAVLGASS (185 aa). Substrate-binding positions include 76 to 83, 150 to 152, and 163 to 165; these read RGGKITWH, AIG, and GFA. The active-site Acyl-thioester intermediate is Cys181.

This sequence belongs to the LipB family.

The protein localises to the cytoplasm. It carries out the reaction octanoyl-[ACP] + L-lysyl-[protein] = N(6)-octanoyl-L-lysyl-[protein] + holo-[ACP] + H(+). It functions in the pathway protein modification; protein lipoylation via endogenous pathway; protein N(6)-(lipoyl)lysine from octanoyl-[acyl-carrier-protein]: step 1/2. Catalyzes the transfer of endogenously produced octanoic acid from octanoyl-acyl-carrier-protein onto the lipoyl domains of lipoate-dependent enzymes. Lipoyl-ACP can also act as a substrate although octanoyl-ACP is likely to be the physiological substrate. The chain is Octanoyltransferase from Thermobifida fusca (strain YX).